The primary structure comprises 773 residues: uncharacterized protein (773 aa).

The tract at residues 192–219 (EASGTNNNPKEIEMNSDTTSSVPKSGST) is disordered.

The protein resides in the cytoplasm. This is an uncharacterized protein from Schizosaccharomyces pombe (strain 972 / ATCC 24843) (Fission yeast).